We begin with the raw amino-acid sequence, 312 residues long: MTPPASAPRVITVVGPTAAGKSDLGVFLAQRLGGEVINADSMQLYRGMDIGTAKLTLPEREGVPHRLLDIWDVTETASVAEYQRLARREIDRLLAEGRTPILVGGSGLYVKGAIDALEFPGTDPEVRARLEAELAERGSGVLHERLAAADPDAARSILASNGRRIVRALEVIEITGKPFTANLPGDEPVYDAVQIGVDVERPELDERIARRVDRMWDAGLVDEVRALEAAGLREGLTASRALGYQQILAVLAGECTEDDARAETVRATKRFARRQDSWFRRDARVVWLGGGHRDRGELPHRALTLVERAVTA.

Gly15–Ser22 is a binding site for ATP. Thr17–Ser22 contacts substrate. The interaction with substrate tRNA stretch occupies residues Asp40–Gln43.

It belongs to the IPP transferase family. Monomer. It depends on Mg(2+) as a cofactor.

It carries out the reaction adenosine(37) in tRNA + dimethylallyl diphosphate = N(6)-dimethylallyladenosine(37) in tRNA + diphosphate. Catalyzes the transfer of a dimethylallyl group onto the adenine at position 37 in tRNAs that read codons beginning with uridine, leading to the formation of N6-(dimethylallyl)adenosine (i(6)A). The sequence is that of tRNA dimethylallyltransferase from Streptomyces griseus subsp. griseus (strain JCM 4626 / CBS 651.72 / NBRC 13350 / KCC S-0626 / ISP 5235).